A 134-amino-acid chain; its full sequence is Arsenate reductase (134 aa).

Residues Cys11, Cys83, and Cys90 each act as nucleophile in the active site. Intrachain disulfides connect Cys11–Cys83 and Cys83–Cys90.

This sequence belongs to the low molecular weight phosphotyrosine protein phosphatase family. Thioredoxin-coupled ArsC subfamily.

It is found in the cytoplasm. It catalyses the reaction arsenate + [thioredoxin]-dithiol + H(+) = arsenite + [thioredoxin]-disulfide + H2O. Catalyzes the reduction of arsenate [As(V)] to arsenite [As(III)]. In Bacillus cereus (strain ZK / E33L), this protein is Arsenate reductase.